The primary structure comprises 122 residues: Small ribosomal subunit protein uS13 (122 aa).

Residues 98 to 122 form a disordered region; sequence VRGQRTHTNARTRKGPAKAIAGKKK.

Belongs to the universal ribosomal protein uS13 family. Part of the 30S ribosomal subunit. Forms a loose heterodimer with protein S19. Forms two bridges to the 50S subunit in the 70S ribosome.

Functionally, located at the top of the head of the 30S subunit, it contacts several helices of the 16S rRNA. In the 70S ribosome it contacts the 23S rRNA (bridge B1a) and protein L5 of the 50S subunit (bridge B1b), connecting the 2 subunits; these bridges are implicated in subunit movement. Contacts the tRNAs in the A and P-sites. This is Small ribosomal subunit protein uS13 from Roseobacter denitrificans (strain ATCC 33942 / OCh 114) (Erythrobacter sp. (strain OCh 114)).